The sequence spans 82 residues: MSTYDEVEIEDMTFDPDTQIFTYPCPCGDRFQISIDDMYDGEDIAVCPSCSLMIQVVFDKEDLVEYYVEANLEPPGKIAVAV.

Residues 3-59 (TYDEVEIEDMTFDPDTQIFTYPCPCGDRFQISIDDMYDGEDIAVCPSCSLMIQVVFD) form the DPH-type MB domain. Cys-25, Cys-27, Cys-47, and Cys-50 together coordinate Fe cation.

Belongs to the DPH3 family. In terms of assembly, component of the 2-(3-amino-3-carboxypropyl)histidine synthase complex composed of DPH1, DPH2, DPH3 and a NADH-dependent reductase, predominantly CBR1. It depends on Fe(2+) as a cofactor.

The protein resides in the cytoplasm. It localises to the nucleus. It catalyses the reaction [3Fe-4S](1+)-[protein] + Fe(2+)-[Dph3] = [3Fe-4S](0)-[protein] + Fe(3+)-[Dph3]. The catalysed reaction is 2 [3Fe-4S](0)-[protein] + 2 Fe(2+)-[Dph3] + NADH = 2 [4Fe-4S](1+)-[protein] + 2 [Dph3] + NAD(+) + H(+). It participates in protein modification; peptidyl-diphthamide biosynthesis. Required for the first step of diphthamide biosynthesis, a post-translational modification of histidine which occurs in elongation factor 2. DPH1 and DPH2 transfer a 3-amino-3-carboxypropyl (ACP) group from S-adenosyl-L-methionine (SAM) to a histidine residue, the reaction is assisted by a reduction system comprising KTI11/DPH3 and a NADH-dependent reductase, predominantly CBR1. Acts as an electron donor to reduce the Fe-S cluster in DPH1-DPH2 keeping the [4Fe-4S] clusters in the active and reduced state. Restores iron to DPH1-DPH2 iron-sulfur clusters which have degraded from [4Fe-4S] to [3Fe-4S] by donating an iron atom to reform [4Fe-4S] clusters, in a manner dependent on the presence of elongation factor 2 and SAM. Associates with the elongator complex and is required for tRNA Wobble base modifications mediated by the elongator complex. The elongator complex is required for multiple tRNA modifications, including mcm5U (5-methoxycarbonylmethyl uridine), mcm5s 2U (5-methoxycarbonylmethyl-2-thiouridine), and ncm5U (5-carbamoylmethyl uridine). The polypeptide is Diphthamide biosynthesis protein 3 (DPH3) (Kluyveromyces lactis (strain ATCC 8585 / CBS 2359 / DSM 70799 / NBRC 1267 / NRRL Y-1140 / WM37) (Yeast)).